Consider the following 154-residue polypeptide: Histidine-containing phosphotransfer protein 1 (154 aa).

At Met-1 the chain carries N-acetylmethionine. One can recognise an HPt domain in the interval 38–143 (NPDFVSQVVT…FKLEQQIVAS (106 aa)). Residue His-79 is modified to Phosphohistidine.

As to quaternary structure, interacts with the B-type response regulators ARR1, ARR2, ARR4 and ARR9. Binds to ETR1, AHK2, AHK3, AHK4, AHK5 and FBR12. In terms of processing, two-component system major event consists of a His-to-Asp phosphorelay between a sensor histidine kinase (HK) and a response regulator (RR). In plants, the His-to-Asp phosphorelay involves an additional intermediate named Histidine-containing phosphotransfer protein (HPt). This multistep phosphorelay consists of a His-Asp-His-Asp sequential transfer of a phosphate group between first a His and an Asp of the HK protein, followed by the transfer to a conserved His of the HPt protein and finally the transfer to an Asp in the receiver domain of the RR protein. As to expression, strongly expressed in roots.

Its subcellular location is the cytoplasm. It is found in the cytosol. The protein resides in the nucleus. In terms of biological role, functions as a two-component phosphorelay mediators between cytokinin sensor histidine kinases and response regulator (B-type ARRs). Plays an important role in propagating cytokinin signal transduction through the multistep His-to-Asp phosphorelay. This is Histidine-containing phosphotransfer protein 1 (AHP1) from Arabidopsis thaliana (Mouse-ear cress).